A 179-amino-acid chain; its full sequence is ATP synthase subunit delta (179 aa).

The protein belongs to the ATPase delta chain family. F-type ATPases have 2 components, F(1) - the catalytic core - and F(0) - the membrane proton channel. F(1) has five subunits: alpha(3), beta(3), gamma(1), delta(1), epsilon(1). F(0) has three main subunits: a(1), b(2) and c(10-14). The alpha and beta chains form an alternating ring which encloses part of the gamma chain. F(1) is attached to F(0) by a central stalk formed by the gamma and epsilon chains, while a peripheral stalk is formed by the delta and b chains.

It is found in the cell inner membrane. Functionally, f(1)F(0) ATP synthase produces ATP from ADP in the presence of a proton or sodium gradient. F-type ATPases consist of two structural domains, F(1) containing the extramembraneous catalytic core and F(0) containing the membrane proton channel, linked together by a central stalk and a peripheral stalk. During catalysis, ATP synthesis in the catalytic domain of F(1) is coupled via a rotary mechanism of the central stalk subunits to proton translocation. In terms of biological role, this protein is part of the stalk that links CF(0) to CF(1). It either transmits conformational changes from CF(0) to CF(1) or is implicated in proton conduction. The sequence is that of ATP synthase subunit delta from Delftia acidovorans (strain DSM 14801 / SPH-1).